We begin with the raw amino-acid sequence, 159 residues long: Ribosomal RNA large subunit methyltransferase H (159 aa).

S-adenosyl-L-methionine is bound by residues leucine 76, glycine 108, and 127–132 (FGKLTM).

This sequence belongs to the RNA methyltransferase RlmH family. Homodimer.

The protein localises to the cytoplasm. It catalyses the reaction pseudouridine(1915) in 23S rRNA + S-adenosyl-L-methionine = N(3)-methylpseudouridine(1915) in 23S rRNA + S-adenosyl-L-homocysteine + H(+). Functionally, specifically methylates the pseudouridine at position 1915 (m3Psi1915) in 23S rRNA. This is Ribosomal RNA large subunit methyltransferase H from Lactobacillus delbrueckii subsp. bulgaricus (strain ATCC 11842 / DSM 20081 / BCRC 10696 / JCM 1002 / NBRC 13953 / NCIMB 11778 / NCTC 12712 / WDCM 00102 / Lb 14).